A 5085-amino-acid polypeptide reads, in one-letter code: Linear gramicidin synthase subunit D (5085 aa).

Carrier domains follow at residues 962–1037 (APRT…AAAG), 2023–2097 (SPST…EEKA), 3544–3619 (APRN…ELLT), and 4601–4676 (APQT…EEII). Serine 997, serine 2058, serine 3579, and serine 4636 each carry O-(pantetheine 4'-phosphoryl)serine.

It belongs to the ATP-dependent AMP-binding enzyme family. In terms of assembly, large multienzyme complex composed of 4 subunits; LgrA, LgrB, LgrC and LgrD. The cofactor is pantetheine 4'-phosphate.

Its function is as follows. Activates the 13th to the 16th (Trp, D-Leu, Trp and Gly) amino acids in linear gramicidin and catalyzes the formation of the peptide bond between them. This enzyme is also responsible for the epimerization of the 14th (D-Leu) amino acid. It also catalyzes the NAD(P)H-dependent reduction of the C-terminal glycine residue of the N-formylated 16-mer peptide, that binds to the peptidyl carrier domain of the terminal module of this protein, to form a peptidyl-aldehyde intermediate that is released from the enzyme complex. The polypeptide is Linear gramicidin synthase subunit D (lgrD) (Brevibacillus parabrevis).